Consider the following 117-residue polypeptide: Non-specific lipid-transfer protein 2 (117 aa).

A signal peptide spans 1 to 25; that stretch reads MAGLMKLACLVLACMIVAGPITSNA. 4 disulfide bridges follow: C29/C76, C39/C53, C54/C99, and C74/C113.

This sequence belongs to the plant LTP family.

Its function is as follows. Plant non-specific lipid-transfer proteins transfer phospholipids as well as galactolipids across membranes. May play a role in wax or cutin deposition in the cell walls of expanding epidermal cells and certain secretory tissues. This Brassica napus (Rape) protein is Non-specific lipid-transfer protein 2 (LTP2).